Consider the following 245-residue polypeptide: Ribonuclease PH (245 aa).

Phosphate contacts are provided by residues arginine 86 and 124-126; that span reads GTR.

The protein belongs to the RNase PH family. Homohexameric ring arranged as a trimer of dimers.

It catalyses the reaction tRNA(n+1) + phosphate = tRNA(n) + a ribonucleoside 5'-diphosphate. In terms of biological role, phosphorolytic 3'-5' exoribonuclease that plays an important role in tRNA 3'-end maturation. Removes nucleotide residues following the 3'-CCA terminus of tRNAs; can also add nucleotides to the ends of RNA molecules by using nucleoside diphosphates as substrates, but this may not be physiologically important. Probably plays a role in initiation of 16S rRNA degradation (leading to ribosome degradation) during starvation. This Bacillus mycoides (strain KBAB4) (Bacillus weihenstephanensis) protein is Ribonuclease PH.